Here is a 386-residue protein sequence, read N- to C-terminus: Succinate--CoA ligase [ADP-forming] subunit beta (386 aa).

The region spanning 9–244 (KALLRAAGIK…TTQEDHRETQ (236 aa)) is the ATP-grasp domain. Residues Lys46, 53–55 (GRG), Glu100, and Arg103 contribute to the ATP site. 2 residues coordinate Mg(2+): Asn199 and Asp213. Residues Asn264 and 321 to 323 (GIV) each bind substrate.

This sequence belongs to the succinate/malate CoA ligase beta subunit family. As to quaternary structure, heterotetramer of two alpha and two beta subunits. It depends on Mg(2+) as a cofactor.

It carries out the reaction succinate + ATP + CoA = succinyl-CoA + ADP + phosphate. It catalyses the reaction GTP + succinate + CoA = succinyl-CoA + GDP + phosphate. Its pathway is carbohydrate metabolism; tricarboxylic acid cycle; succinate from succinyl-CoA (ligase route): step 1/1. In terms of biological role, succinyl-CoA synthetase functions in the citric acid cycle (TCA), coupling the hydrolysis of succinyl-CoA to the synthesis of either ATP or GTP and thus represents the only step of substrate-level phosphorylation in the TCA. The beta subunit provides nucleotide specificity of the enzyme and binds the substrate succinate, while the binding sites for coenzyme A and phosphate are found in the alpha subunit. This Dichelobacter nodosus (strain VCS1703A) protein is Succinate--CoA ligase [ADP-forming] subunit beta.